A 1359-amino-acid chain; its full sequence is Nuclear protein STH1/NPS1 (1359 aa).

A Phosphoserine modification is found at Ser38. An HSA domain is found at 307–383 (LERQQLLEKR…AKQRLAALKS (77 aa)). In terms of domain architecture, Helicase ATP-binding spans 482–647 (VSLYNNHLNG…WALLNFVLPK (166 aa)). 495-502 (DEMGLGKT) serves as a coordination point for ATP. Residues 597–600 (DEGH) carry the DEGH box motif. In terms of domain architecture, Helicase C-terminal spans 795 to 956 (LLDRVLPKFK…NKSTAEEQEA (162 aa)). Residues 1090–1246 (RERRRLRQNG…TAAKKTKTKS (157 aa)) form a disordered region. Residues 1108–1126 (LENTPEASETSLIENNSFT) are compositionally biased toward polar residues. Basic residues-rich tracts occupy residues 1143–1154 (RSKRRSSRKKRT) and 1198–1210 (KKKK…KIKL). Positions 1219-1232 (NDGKRAEEKPESKS) are enriched in basic and acidic residues. Residues 1233-1246 (PAKKTAAKKTKTKS) show a composition bias toward basic residues. Residues 1257 to 1357 (KLVEEMREQL…EFTDEWFKEH (101 aa)) enclose the Bromo domain.

The protein belongs to the SNF2/RAD54 helicase family. Interacts directly with SFH1, CSE4, histones H3, H4 and H2B, and via its N-terminus, with RSC8. Interacts with LDB7, NPL6 and RTT102. Component of the two forms of the RSC complex composed of at least either RSC1 or RSC2, and ARP7, ARP9, LDB7, NPL6, RSC3, RSC30, RSC4, RSC58, RSC6, RSC8, RSC9, SFH1, STH1, HTL1 and probably RTT102. The complexes interact with histone and histone variant components of centromeric chromatin.

Its subcellular location is the nucleus. The enzyme catalyses ATP + H2O = ADP + phosphate + H(+). Functionally, catalytic component of the chromatin structure-remodeling complex (RSC), which is involved in transcription regulation and nucleosome positioning. RSC is responsible for the transfer of a histone octamer from a nucleosome core particle to naked DNA. The reaction requires ATP and involves an activated RSC-nucleosome intermediate. Remodeling reaction also involves DNA translocation, DNA twist and conformational change. As a reconfigurer of centromeric and flanking nucleosomes, RSC complex is required both for proper kinetochore function in chromosome segregation and, via a PKC1-dependent signaling pathway, for organization of the cellular cytoskeleton. This subunit is the essential ATPase of the complex. It is a DNA translocase capable of nucleosome remodeling. Required for full expression of early meiotic genes. Essential for mitotic growth and repression of CHA1 expression. Also involved in G2 phase control. The chain is Nuclear protein STH1/NPS1 (STH1) from Saccharomyces cerevisiae (strain ATCC 204508 / S288c) (Baker's yeast).